The sequence spans 875 residues: Alanine--tRNA ligase (875 aa).

Zn(2+) contacts are provided by His565, His569, Cys666, and His670.

This sequence belongs to the class-II aminoacyl-tRNA synthetase family. Zn(2+) serves as cofactor.

The protein localises to the cytoplasm. It catalyses the reaction tRNA(Ala) + L-alanine + ATP = L-alanyl-tRNA(Ala) + AMP + diphosphate. Catalyzes the attachment of alanine to tRNA(Ala) in a two-step reaction: alanine is first activated by ATP to form Ala-AMP and then transferred to the acceptor end of tRNA(Ala). Also edits incorrectly charged Ser-tRNA(Ala) and Gly-tRNA(Ala) via its editing domain. This Leptothrix cholodnii (strain ATCC 51168 / LMG 8142 / SP-6) (Leptothrix discophora (strain SP-6)) protein is Alanine--tRNA ligase.